We begin with the raw amino-acid sequence, 338 residues long: Glyceraldehyde-3-phosphate dehydrogenase, cytosolic (338 aa).

NAD(+) contacts are provided by residues 13 to 14 (RI), Asp-35, and Arg-82. D-glyceraldehyde 3-phosphate contacts are provided by residues 153–155 (SCT), Thr-184, 213–214 (TG), and Arg-236. Catalysis depends on Cys-154, which acts as the Nucleophile. Asn-318 is a binding site for NAD(+).

The protein belongs to the glyceraldehyde-3-phosphate dehydrogenase family. In terms of assembly, homotetramer.

The protein resides in the cytoplasm. It catalyses the reaction D-glyceraldehyde 3-phosphate + phosphate + NAD(+) = (2R)-3-phospho-glyceroyl phosphate + NADH + H(+). It participates in carbohydrate degradation; glycolysis; pyruvate from D-glyceraldehyde 3-phosphate: step 1/5. Its function is as follows. Key enzyme in glycolysis that catalyzes the first step of the pathway by converting D-glyceraldehyde 3-phosphate (G3P) into 3-phospho-D-glyceroyl phosphate. Essential for the maintenance of cellular ATP levels and carbohydrate metabolism. In Dianthus caryophyllus (Carnation), this protein is Glyceraldehyde-3-phosphate dehydrogenase, cytosolic (GAPC).